A 775-amino-acid chain; its full sequence is Aconitate hydratase, mitochondrial (775 aa).

The transit peptide at 1–25 (MLTTLARASAMLLGARGFASAADLD) directs the protein to the mitochondrion. Substrate is bound by residues glutamine 95 and 188-190 (DSH). Asparagine 337 carries N-linked (GlcNAc...) asparagine glycosylation. Residue cysteine 381 participates in [4Fe-4S] cluster binding. Asparagine 383 carries an N-linked (GlcNAc...) asparagine glycan. Residues cysteine 444 and cysteine 447 each contribute to the [4Fe-4S] cluster site. Arginine 470 serves as a coordination point for substrate. N-linked (GlcNAc...) asparagine glycosylation is present at asparagine 471. The substrate site is built by arginine 475 and arginine 603. A glycan (N-linked (GlcNAc...) asparagine) is linked at asparagine 608. Substrate is bound at residue 666–667 (SR). N-linked (GlcNAc...) asparagine glycosylation is found at asparagine 754 and asparagine 763.

The protein belongs to the aconitase/IPM isomerase family. Monomer. The cofactor is [4Fe-4S] cluster.

The protein localises to the mitochondrion. The enzyme catalyses citrate = D-threo-isocitrate. The protein operates within carbohydrate metabolism; tricarboxylic acid cycle; isocitrate from oxaloacetate: step 2/2. In terms of biological role, catalyzes the isomerization of citrate to isocitrate via cis-aconitate. In Arthroderma benhamiae (strain ATCC MYA-4681 / CBS 112371) (Trichophyton mentagrophytes), this protein is Aconitate hydratase, mitochondrial.